The chain runs to 375 residues: Putative F-box protein At5g52620 (375 aa).

In terms of domain architecture, F-box spans 5 to 52; the sequence is GKSDPIPIDIILDILSRLSTNSIAKFGLASKFCGSILRGQDFIELFLI.

The protein is Putative F-box protein At5g52620 of Arabidopsis thaliana (Mouse-ear cress).